The chain runs to 308 residues: MVKTVIFGHKNPDTDTICSSIAYADLKTKLGHEVAPVRLGEVNLETQFALDKFNIHAPELIERVEDGAEVILVDHNEFQQSVDNIENATIREVIDHHRISNFETKEPLYFRAEPVGCTATILNKMYKENDISVDKNIAGILLSAIISDSLLLKSPTCTEEDVQAAHELAEIAGVDLESYGLDMLKAGADLSDKTVKDLITMDAKEFAMGNAKVEIAQVNAVDTNEIYKLHDKLVEVITSRINDNDLDLFLFVVTDILNNDSEVLAIGNGKDKVNAAFNVTLDSTNRALLKGVVSRKKQIVTVLTEQFK.

Mn(2+) is bound by residues histidine 9, aspartate 13, aspartate 15, aspartate 74, histidine 96, and aspartate 148.

The protein belongs to the PPase class C family. It depends on Mn(2+) as a cofactor.

It is found in the cytoplasm. The catalysed reaction is diphosphate + H2O = 2 phosphate + H(+). This chain is Probable manganese-dependent inorganic pyrophosphatase, found in Oceanobacillus iheyensis (strain DSM 14371 / CIP 107618 / JCM 11309 / KCTC 3954 / HTE831).